Consider the following 316-residue polypeptide: Neuroguidin (316 aa).

2 disordered regions span residues 143-172 (SEAD…VKKY) and 280-316 (SALT…RKRH). Over residues 145–157 (ADEGESDSGEDCA) the composition is skewed to acidic residues. Residues 297–316 (KKSRKGPKKSKKRKGFRKRH) show a composition bias toward basic residues.

This sequence belongs to the SAS10 family. Part of the small subunit (SSU) processome, composed of more than 70 proteins and the RNA chaperone small nucleolar RNA (snoRNA) U3.

The protein resides in the nucleus. It is found in the nucleolus. The protein localises to the chromosome. It localises to the centromere. Its subcellular location is the cytoplasm. The protein resides in the cell projection. It is found in the axon. The protein localises to the dendrite. It localises to the filopodium. Its function is as follows. Part of the small subunit (SSU) processome, first precursor of the small eukaryotic ribosomal subunit. During the assembly of the SSU processome in the nucleolus, many ribosome biogenesis factors, an RNA chaperone and ribosomal proteins associate with the nascent pre-rRNA and work in concert to generate RNA folding, modifications, rearrangements and cleavage as well as targeted degradation of pre-ribosomal RNA by the RNA exosome. Its dissociation from the complex determines the transition from state pre-A1 to state pre-A1*. May inhibit mRNA translation. The polypeptide is Neuroguidin (ngdn) (Xenopus tropicalis (Western clawed frog)).